We begin with the raw amino-acid sequence, 154 residues long: NADPH-dependent 7-cyano-7-deazaguanine reductase (154 aa).

Polar residues predominate over residues 1–21 (MPNTDVSSLSMLGQQTETAQS). The disordered stretch occupies residues 1-28 (MPNTDVSSLSMLGQQTETAQSPEEAVLE). The Thioimide intermediate role is filled by C52. D59 (proton donor) is an active-site residue. Substrate is bound by residues 74 to 76 (VES) and 93 to 94 (HE).

This sequence belongs to the GTP cyclohydrolase I family. QueF type 1 subfamily.

The protein localises to the cytoplasm. The enzyme catalyses 7-aminomethyl-7-carbaguanine + 2 NADP(+) = 7-cyano-7-deazaguanine + 2 NADPH + 3 H(+). It participates in tRNA modification; tRNA-queuosine biosynthesis. Its function is as follows. Catalyzes the NADPH-dependent reduction of 7-cyano-7-deazaguanine (preQ0) to 7-aminomethyl-7-deazaguanine (preQ1). The protein is NADPH-dependent 7-cyano-7-deazaguanine reductase of Rhizobium johnstonii (strain DSM 114642 / LMG 32736 / 3841) (Rhizobium leguminosarum bv. viciae).